Here is a 388-residue protein sequence, read N- to C-terminus: Phosphopentomutase (388 aa).

Aspartate 11, aspartate 283, histidine 288, aspartate 324, histidine 325, and histidine 336 together coordinate Mn(2+).

Belongs to the phosphopentomutase family. Mn(2+) is required as a cofactor.

The protein resides in the cytoplasm. The enzyme catalyses 2-deoxy-alpha-D-ribose 1-phosphate = 2-deoxy-D-ribose 5-phosphate. It catalyses the reaction alpha-D-ribose 1-phosphate = D-ribose 5-phosphate. The protein operates within carbohydrate degradation; 2-deoxy-D-ribose 1-phosphate degradation; D-glyceraldehyde 3-phosphate and acetaldehyde from 2-deoxy-alpha-D-ribose 1-phosphate: step 1/2. Its function is as follows. Isomerase that catalyzes the conversion of deoxy-ribose 1-phosphate (dRib-1-P) and ribose 1-phosphate (Rib-1-P) to deoxy-ribose 5-phosphate (dRib-5-P) and ribose 5-phosphate (Rib-5-P), respectively. In Enterococcus faecalis (strain ATCC 700802 / V583), this protein is Phosphopentomutase.